Here is a 484-residue protein sequence, read N- to C-terminus: Acetyl-coenzyme A carboxylase carboxyl transferase subunit beta, chloroplastic (484 aa).

The 262-residue stretch at 223-484 folds into the CoA carboxyltransferase N-terminal domain; sequence LWIQCDNCYG…LHAFFPLNKN (262 aa). Residues Cys-227, Cys-230, Cys-243, and Cys-246 each contribute to the Zn(2+) site. The C4-type zinc finger occupies 227–246; sequence CDNCYGLMYKKVKMNVCEQC.

Belongs to the AccD/PCCB family. Acetyl-CoA carboxylase is a heterohexamer composed of biotin carboxyl carrier protein, biotin carboxylase and 2 subunits each of ACCase subunit alpha and ACCase plastid-coded subunit beta (accD). Zn(2+) is required as a cofactor.

It localises to the plastid. The protein resides in the chloroplast stroma. The enzyme catalyses N(6)-carboxybiotinyl-L-lysyl-[protein] + acetyl-CoA = N(6)-biotinyl-L-lysyl-[protein] + malonyl-CoA. It participates in lipid metabolism; malonyl-CoA biosynthesis; malonyl-CoA from acetyl-CoA: step 1/1. In terms of biological role, component of the acetyl coenzyme A carboxylase (ACC) complex. Biotin carboxylase (BC) catalyzes the carboxylation of biotin on its carrier protein (BCCP) and then the CO(2) group is transferred by the transcarboxylase to acetyl-CoA to form malonyl-CoA. This Olimarabidopsis pumila (Dwarf rocket) protein is Acetyl-coenzyme A carboxylase carboxyl transferase subunit beta, chloroplastic.